The chain runs to 118 residues: Small ribosomal subunit protein uS13 (118 aa).

The tract at residues 94 to 118 (GLPLRGQRTRTNARTRKGPRRPIRK) is disordered.

It belongs to the universal ribosomal protein uS13 family. Part of the 30S ribosomal subunit. Forms a loose heterodimer with protein S19. Forms two bridges to the 50S subunit in the 70S ribosome.

Located at the top of the head of the 30S subunit, it contacts several helices of the 16S rRNA. In the 70S ribosome it contacts the 23S rRNA (bridge B1a) and protein L5 of the 50S subunit (bridge B1b), connecting the 2 subunits; these bridges are implicated in subunit movement. Contacts the tRNAs in the A and P-sites. In Thioalkalivibrio sulfidiphilus (strain HL-EbGR7), this protein is Small ribosomal subunit protein uS13.